The primary structure comprises 176 residues: ATP-dependent protease subunit HslV (176 aa).

The active site involves T5. Na(+) is bound by residues S161, C164, and T167.

This sequence belongs to the peptidase T1B family. HslV subfamily. In terms of assembly, a double ring-shaped homohexamer of HslV is capped on each side by a ring-shaped HslU homohexamer. The assembly of the HslU/HslV complex is dependent on binding of ATP.

Its subcellular location is the cytoplasm. It carries out the reaction ATP-dependent cleavage of peptide bonds with broad specificity.. Allosterically activated by HslU binding. In terms of biological role, protease subunit of a proteasome-like degradation complex believed to be a general protein degrading machinery. This chain is ATP-dependent protease subunit HslV, found in Desulfitobacterium hafniense (strain DSM 10664 / DCB-2).